Consider the following 478-residue polypeptide: NADH-quinone oxidoreductase subunit N (478 aa).

13 consecutive transmembrane segments (helical) span residues serine 7–alanine 27, isoleucine 46–phenylalanine 66, alanine 74–serine 94, phenylalanine 109–isoleucine 129, phenylalanine 163–alanine 183, valine 204–valine 224, alanine 237–leucine 257, glutamine 273–valine 293, leucine 300–asparagine 320, methionine 328–leucine 348, leucine 371–phenylalanine 391, glycine 405–leucine 425, and tryptophan 451–isoleucine 471.

This sequence belongs to the complex I subunit 2 family. As to quaternary structure, NDH-1 is composed of 14 different subunits. Subunits NuoA, H, J, K, L, M, N constitute the membrane sector of the complex.

It localises to the cell inner membrane. The enzyme catalyses a quinone + NADH + 5 H(+)(in) = a quinol + NAD(+) + 4 H(+)(out). Its function is as follows. NDH-1 shuttles electrons from NADH, via FMN and iron-sulfur (Fe-S) centers, to quinones in the respiratory chain. The immediate electron acceptor for the enzyme in this species is believed to be ubiquinone. Couples the redox reaction to proton translocation (for every two electrons transferred, four hydrogen ions are translocated across the cytoplasmic membrane), and thus conserves the redox energy in a proton gradient. The chain is NADH-quinone oxidoreductase subunit N from Hydrogenovibrio crunogenus (strain DSM 25203 / XCL-2) (Thiomicrospira crunogena).